The chain runs to 527 residues: ATP-dependent RNA helicase dbp8 (527 aa).

The segment covering 1-16 has biased composition (basic and acidic residues); the sequence is MENDHSSSDEHEHENP. The disordered stretch occupies residues 1–70; sequence MENDHSSSDE…DTSTGTDNPV (70 aa). The Q motif motif lies at 86–114; that stretch reads SSFKALNVAPWLIGSLTTMAVRKPTAIQR. One can recognise a Helicase ATP-binding domain in the interval 117-296; it reads IPEILKGRDC…SMPRASTKPP (180 aa). 130–137 serves as a coordination point for ATP; sequence SRTGSGKT. The short motif at 239–242 is the DEAD box element; that stretch reads DEAD. Residues 324-486 form the Helicase C-terminal domain; the sequence is TLKQTYLKVP…EWSEEGVSVE (163 aa).

The protein belongs to the DEAD box helicase family. DDX49/DBP8 subfamily.

The protein resides in the nucleus. The protein localises to the nucleolus. It carries out the reaction ATP + H2O = ADP + phosphate + H(+). ATP-binding RNA helicase involved in 40S ribosomal subunit biogenesis and is required for the normal formation of 18S rRNAs through pre-rRNA processing at A0, A1 and A2 sites. Required for vegetative growth. The sequence is that of ATP-dependent RNA helicase dbp8 (dbp8) from Aspergillus terreus (strain NIH 2624 / FGSC A1156).